The sequence spans 540 residues: Phenylalanine--tRNA ligase beta subunit (540 aa).

A B5 domain is found at 268–342; it reads LRHTSVPFSL…MAYGYDRFTL (75 aa). Residues Asp-320, Asp-326, Glu-329, and Asp-330 each coordinate Mg(2+).

Belongs to the phenylalanyl-tRNA synthetase beta subunit family. Type 2 subfamily. As to quaternary structure, tetramer of two alpha and two beta subunits. Mg(2+) serves as cofactor.

It localises to the cytoplasm. It catalyses the reaction tRNA(Phe) + L-phenylalanine + ATP = L-phenylalanyl-tRNA(Phe) + AMP + diphosphate + H(+). This is Phenylalanine--tRNA ligase beta subunit from Metallosphaera sedula (strain ATCC 51363 / DSM 5348 / JCM 9185 / NBRC 15509 / TH2).